Consider the following 131-residue polypeptide: Universal stress protein C (131 aa).

The protein belongs to the universal stress protein A family.

The protein resides in the cytoplasm. Its function is as follows. Required for resistance to DNA-damaging agents. The chain is Universal stress protein C (uspC) from Salmonella typhi.